Reading from the N-terminus, the 514-residue chain is Maltose/maltodextrin transport system permease protein MalF (514 aa).

Residues 1–16 (MDVIKKKHWWQSDALK) lie on the Cytoplasmic side of the membrane. Residues 17 to 36 (WSVLGLLGLLVGYLVVLMYA) traverse the membrane as a helical segment. Over 37–39 (QGE) the chain is Periplasmic. A helical membrane pass occupies residues 40-58 (YLFAITTLILSSAGLYIFA). The Cytoplasmic segment spans residues 59–66 (NRKAYAWR). The chain crosses the membrane as a helical span at residues 67-92 (YVYPGMAGMGLFVLFPLVCTIAIAFT). Over 93 to 275 (NYSSTNQLTF…RVFTDEGIQK (183 aa)) the chain is Periplasmic. Residues 276-306 (PFLAIFVWTVVFSLITVFLTVAVGMVLACLV) traverse the membrane as a helical segment. The region spanning 281-505 (FVWTVVFSLI…LLVGALAIVN (225 aa)) is the ABC transmembrane type-1 domain. Topologically, residues 307-318 (QWEALRGKAVYR) are cytoplasmic. Residues 319-336 (VLLILPYAVPSFISILIF) form a helical membrane-spanning segment. At 337–369 (KGLFNQSFGEINMMLSALFGVKPAWFSDPTTAR) the chain is on the periplasmic side. A helical transmembrane segment spans residues 370-392 (TMLIIVNTWLGYPYMMILCMGLL). Residues 393–425 (KAIPDDLYEASAMDGAGPFQNFFKITLPLLIKP) are Cytoplasmic-facing. The chain crosses the membrane as a helical span at residues 426–452 (LTPLMIASFAFNFNNFVLIQLLTNGGP). The Periplasmic portion of the chain corresponds to 453 to 483 (DRLGTTTPAGYTDLLVNYTYRIAFEGGGGQD). A helical transmembrane segment spans residues 484-505 (FGLAAAIATLIFLLVGALAIVN). Residues 506 to 514 (LKATRMKFD) are Cytoplasmic-facing.

It belongs to the binding-protein-dependent transport system permease family. MalFG subfamily. The complex is composed of two ATP-binding proteins (MalK), two transmembrane proteins (MalG and MalF) and a solute-binding protein (MalE). Protein stability and stable complex formation require YidC.

Its subcellular location is the cell inner membrane. Its function is as follows. Part of the ABC transporter complex MalEFGK involved in maltose/maltodextrin import. Probably responsible for the translocation of the substrate across the membrane. This chain is Maltose/maltodextrin transport system permease protein MalF, found in Escherichia coli (strain K12).